Consider the following 501-residue polypeptide: Splicing factor ESS-2 homolog (501 aa).

Low complexity-rich tracts occupy residues 1 to 18 and 105 to 115; these read MSATTRTPATPGTPGTPG and ISGTGRSTSRR. Disordered regions lie at residues 1–20 and 105–163; these read MSATTRTPATPGTPGTPGSL and ISGT…GRDT. The segment covering 126-151 has biased composition (polar residues); that stretch reads TPVSQAKCSNTPLPNSRATDTPFSTD. Positions 152–163 are enriched in basic and acidic residues; it reads GSEKSDAEGRDT. Phosphoserine occurs at positions 409 and 411. Residues 425-471 are disordered; sequence RGTPRLRHTPSPMSGRKRKVTPGVVRSTNTPILGEPKPKQQAKISTP.

The protein belongs to the ESS2 family.

The protein localises to the nucleus. The chain is Splicing factor ESS-2 homolog (Es2) from Drosophila melanogaster (Fruit fly).